The sequence spans 165 residues: MRVALFPGSFDPITWGHIDLVKRASLIFDKVIVLVANNSAKSYLLSDIERYELTFEVIASLGWSRIFVDRYDGIILDYALKNNIGFIVRGVRAFHDFEFEFERYVVNNKLSPSIDIVFLPSSDKYLFVRSDLVKELIKNKNFDLSSFIPDLVQKKLKSKFIDKLS.

Position 9 (Ser9) interacts with substrate. Residues Ser9 to Phe10 and His17 each bind ATP. Residues Lys41, Ile75, and Arg89 each coordinate substrate. Residues Gly90–Arg92, Glu100, and Tyr125–Asp131 contribute to the ATP site.

It belongs to the bacterial CoaD family. Homohexamer. The cofactor is Mg(2+).

It localises to the cytoplasm. It carries out the reaction (R)-4'-phosphopantetheine + ATP + H(+) = 3'-dephospho-CoA + diphosphate. It participates in cofactor biosynthesis; coenzyme A biosynthesis; CoA from (R)-pantothenate: step 4/5. In terms of biological role, reversibly transfers an adenylyl group from ATP to 4'-phosphopantetheine, yielding dephospho-CoA (dPCoA) and pyrophosphate. This Borrelia turicatae (strain 91E135) protein is Phosphopantetheine adenylyltransferase.